The primary structure comprises 279 residues: MDLSFTKMHGTGNDYIYINCFKEKFTVEDAIKYSPILSHRHYSIGADGIILIMPSDKADVQMRMFNYDGSESEMCGNGIRCVAKYAYDRGISKNNPMKIETLRGILEAELFLKDEEVDTVEISMSSPILEGLKIPTTIDKTPIINEPIIFNDKTYYFTAVSMGNPHAVIFVNDLHNMDISSIGSYMENNSIFPNRTNVEFVEIINRGEVKQRTWERGSGETLACGTGASAVCVAGFISGRTDNIILNHLLGGDLILRYENDNVFMKGEARYCFEGTITL.

Asn-13 and Asn-66 together coordinate substrate. The active-site Proton donor is the Cys-75. Substrate is bound by residues 76–77 (GN), Asn-164, Asn-197, and 215–216 (ER). Cys-224 (proton acceptor) is an active-site residue. 225–226 (GT) provides a ligand contact to substrate.

This sequence belongs to the diaminopimelate epimerase family. In terms of assembly, homodimer.

The protein resides in the cytoplasm. It catalyses the reaction (2S,6S)-2,6-diaminopimelate = meso-2,6-diaminopimelate. It participates in amino-acid biosynthesis; L-lysine biosynthesis via DAP pathway; DL-2,6-diaminopimelate from LL-2,6-diaminopimelate: step 1/1. In terms of biological role, catalyzes the stereoinversion of LL-2,6-diaminopimelate (L,L-DAP) to meso-diaminopimelate (meso-DAP), a precursor of L-lysine and an essential component of the bacterial peptidoglycan. This is Diaminopimelate epimerase from Brachyspira hyodysenteriae (strain ATCC 49526 / WA1).